The sequence spans 361 residues: uncharacterized protein (361 aa).

WD repeat units follow at residues 57–96 (RHKK…VSSK), 103–142 (KEIS…GIIH), 146–184 (DHID…KPIL), 187–229 (EQDE…DHTD), 237–275 (SHDF…YERI), and 280–318 (SSRS…GDES). The interval 311–361 (DQKEGDESSSSDNLDSDEDSSSDSEFSSPKKKKKVGNQGKKPLGTDFFDGL) is disordered.

It localises to the nucleus. It is found in the nucleolus. This is an uncharacterized protein from Schizosaccharomyces pombe (strain 972 / ATCC 24843) (Fission yeast).